Here is a 487-residue protein sequence, read N- to C-terminus: 3-octaprenyl-4-hydroxybenzoate carboxy-lyase (487 aa).

A Mn(2+)-binding site is contributed by Asn-172. Prenylated FMN contacts are provided by residues 175–177, 189–191, and 194–195; these read IYR, RWL, and RG. A Mn(2+)-binding site is contributed by Glu-238. The active-site Proton donor is the Asp-287.

Belongs to the UbiD family. In terms of assembly, homohexamer. Prenylated FMN is required as a cofactor. Mn(2+) serves as cofactor.

The protein resides in the cell membrane. The enzyme catalyses a 4-hydroxy-3-(all-trans-polyprenyl)benzoate + H(+) = a 2-(all-trans-polyprenyl)phenol + CO2. It participates in cofactor biosynthesis; ubiquinone biosynthesis. Its function is as follows. Catalyzes the decarboxylation of 3-octaprenyl-4-hydroxy benzoate to 2-octaprenylphenol, an intermediate step in ubiquinone biosynthesis. The sequence is that of 3-octaprenyl-4-hydroxybenzoate carboxy-lyase from Nitrosospira multiformis (strain ATCC 25196 / NCIMB 11849 / C 71).